A 266-amino-acid chain; its full sequence is RNA polymerase II subunit A C-terminal domain phosphatase ssu-72 (266 aa).

Residues 1 to 31 (MSAVDTPTGAASSSKPDQNEQNGQNGGREDS) form a disordered region. The span at 9-23 (GAASSSKPDQNEQNG) shows a compositional bias: polar residues.

It belongs to the SSU72 phosphatase family. In terms of assembly, component of the cleavage and polyadenylation factor (CPF) complex.

The protein resides in the nucleus. It carries out the reaction O-phospho-L-seryl-[protein] + H2O = L-seryl-[protein] + phosphate. The catalysed reaction is O-phospho-L-threonyl-[protein] + H2O = L-threonyl-[protein] + phosphate. Functionally, processively dephosphorylates Ser-5 of the heptad repeats YSPTSPS in the C-terminal domain of the largest RNA polymerase II subunit (rpb-1). Its function is as follows. Component of the cleavage and polyadenylation factor (CPF) complex, which plays a key role in polyadenylation-dependent pre-mRNA 3'-end formation and cooperates with cleavage factors including the CFIA complex and NAB4/CFIB. Ssu-72 is required for 3'-end formation of snoRNAs. This Neurospora crassa (strain ATCC 24698 / 74-OR23-1A / CBS 708.71 / DSM 1257 / FGSC 987) protein is RNA polymerase II subunit A C-terminal domain phosphatase ssu-72 (ssu-72).